The primary structure comprises 266 residues: Type III pantothenate kinase (266 aa).

6–13 (DVGNSHTV) is an ATP binding site. Residue 112–115 (GIDR) coordinates substrate. The Proton acceptor role is filled by aspartate 114. Aspartate 134 provides a ligand contact to K(+). Residue threonine 137 coordinates ATP. A substrate-binding site is contributed by threonine 190.

Belongs to the type III pantothenate kinase family. In terms of assembly, homodimer. Requires NH4(+) as cofactor. K(+) serves as cofactor.

It is found in the cytoplasm. The enzyme catalyses (R)-pantothenate + ATP = (R)-4'-phosphopantothenate + ADP + H(+). The protein operates within cofactor biosynthesis; coenzyme A biosynthesis; CoA from (R)-pantothenate: step 1/5. Functionally, catalyzes the phosphorylation of pantothenate (Pan), the first step in CoA biosynthesis. The polypeptide is Type III pantothenate kinase (Desulfotalea psychrophila (strain LSv54 / DSM 12343)).